The sequence spans 88 residues: Large ribosomal subunit protein bL27 (88 aa).

The segment at 1–21 is disordered; sequence MAHKKGTGSTRNGRDSRAQRL.

The protein belongs to the bacterial ribosomal protein bL27 family.

This Picosynechococcus sp. (strain ATCC 27264 / PCC 7002 / PR-6) (Agmenellum quadruplicatum) protein is Large ribosomal subunit protein bL27.